The primary structure comprises 190 residues: dCTP deaminase, dUMP-forming (190 aa).

DCTP-binding positions include 101 to 106 (KSSLGR), D119, 127 to 129 (TLE), Q148, Y162, K170, and Q174. E129 (proton donor/acceptor) is an active-site residue. A disordered region spans residues 160–190 (HPYGSSRAGSKYQGQRGPTPSRSCQNFIRST). Over residues 171 to 190 (YQGQRGPTPSRSCQNFIRST) the composition is skewed to polar residues.

Belongs to the dCTP deaminase family. Homotrimer.

The enzyme catalyses dCTP + 2 H2O = dUMP + NH4(+) + diphosphate. It participates in pyrimidine metabolism; dUMP biosynthesis; dUMP from dCTP: step 1/1. Functionally, bifunctional enzyme that catalyzes both the deamination of dCTP to dUTP and the hydrolysis of dUTP to dUMP without releasing the toxic dUTP intermediate. This chain is dCTP deaminase, dUMP-forming, found in Mycobacterium bovis (strain ATCC BAA-935 / AF2122/97).